A 99-amino-acid chain; its full sequence is MKSIDPRHYDVIVSPVVTEKATMASEHNKVVFKVLSGATKPQIKEAVEKLFDVKVKSVNTLVRKGKSKSFRGTFGTQSDVKRAVVTLEEGHRIDVTTGL.

It belongs to the universal ribosomal protein uL23 family. Part of the 50S ribosomal subunit. Contacts protein L29, and trigger factor when it is bound to the ribosome.

In terms of biological role, one of the early assembly proteins it binds 23S rRNA. One of the proteins that surrounds the polypeptide exit tunnel on the outside of the ribosome. Forms the main docking site for trigger factor binding to the ribosome. In Rhodopseudomonas palustris (strain BisB5), this protein is Large ribosomal subunit protein uL23.